The following is a 1044-amino-acid chain: Spindle assembly checkpoint serine/threonine-protein kinase bub1 (1044 aa).

The BUB1 N-terminal domain occupies 36 to 204 (FQEELDIIEE…SSPFPPPRIV (169 aa)). Disordered stretches follow at residues 209 to 259 (PVSS…PLLY), 317 to 343 (VHHD…TPTR), 404 to 446 (ESLE…SQEE), 484 to 555 (KNSN…DSNS), and 685 to 705 (IKPK…SLDG). Positions 223-239 (QVFSDASSSRDSQNASD) are enriched in polar residues. Positions 430 to 442 (NSSNSGATSLTGR) are enriched in polar residues. Residues 504 to 518 (STLQEETATGTTSTT) are compositionally biased toward low complexity. The span at 544–555 (RSPQYSTVDSNS) shows a compositional bias: polar residues. At threonine 550 the chain carries Phosphothreonine. In terms of domain architecture, Protein kinase spans 718–1044 (LSVISKLGQG…LLKSIEKRKI (327 aa)). ATP contacts are provided by alanine 728, phenylalanine 729, alanine 730, lysine 762, and aspartate 809. Catalysis depends on aspartate 861, which acts as the Proton acceptor. Aspartate 865, asparagine 866, and aspartate 900 together coordinate ATP.

The protein belongs to the protein kinase superfamily. Ser/Thr protein kinase family. BUB1 subfamily. Part of the BUB1-BUB3 complex, composed of bub1 and bub3. Interacts with spc7 (when phosphorylated on MELT motifs); to recruit the bub1-bub3 complex to kinetochores. Interacts with mad3. In terms of processing, autophosphorylated.

It is found in the nucleus. The protein resides in the chromosome. The protein localises to the centromere. It localises to the kinetochore. It carries out the reaction L-seryl-[protein] + ATP = O-phospho-L-seryl-[protein] + ADP + H(+). It catalyses the reaction L-threonyl-[protein] + ATP = O-phospho-L-threonyl-[protein] + ADP + H(+). Its function is as follows. Involved in mitotic spindle assembly checkpoint signaling, a process that delays anaphase until chromosomes are bioriented on the spindle, and in the repair of incorrect mitotic kinetochore-spindle microtubule attachments. Acts as a kinetochore scaffold for the recruitment of other spindle assembly checkpoint components. The protein is Spindle assembly checkpoint serine/threonine-protein kinase bub1 of Schizosaccharomyces pombe (strain 972 / ATCC 24843) (Fission yeast).